A 223-amino-acid polypeptide reads, in one-letter code: Deoxyribose-phosphate aldolase (223 aa).

D89 acts as the Proton donor/acceptor in catalysis. Residue K152 is the Schiff-base intermediate with acetaldehyde of the active site. The Proton donor/acceptor role is filled by K181.

It belongs to the DeoC/FbaB aldolase family. DeoC type 1 subfamily.

Its subcellular location is the cytoplasm. It catalyses the reaction 2-deoxy-D-ribose 5-phosphate = D-glyceraldehyde 3-phosphate + acetaldehyde. It functions in the pathway carbohydrate degradation; 2-deoxy-D-ribose 1-phosphate degradation; D-glyceraldehyde 3-phosphate and acetaldehyde from 2-deoxy-alpha-D-ribose 1-phosphate: step 2/2. Catalyzes a reversible aldol reaction between acetaldehyde and D-glyceraldehyde 3-phosphate to generate 2-deoxy-D-ribose 5-phosphate. The polypeptide is Deoxyribose-phosphate aldolase (Listeria monocytogenes serotype 4b (strain CLIP80459)).